Here is a 184-residue protein sequence, read N- to C-terminus: Ribosome-recycling factor (184 aa).

A disordered region spans residues 134–167 (MNDQLKKDEKNGDITEDELRSGTEDVQKATDNSI).

Belongs to the RRF family.

The protein localises to the cytoplasm. Responsible for the release of ribosomes from messenger RNA at the termination of protein biosynthesis. May increase the efficiency of translation by recycling ribosomes from one round of translation to another. The sequence is that of Ribosome-recycling factor from Staphylococcus aureus (strain Mu3 / ATCC 700698).